Reading from the N-terminus, the 194-residue chain is Peptidyl-tRNA hydrolase (194 aa).

Residue Y17 participates in tRNA binding. H22 functions as the Proton acceptor in the catalytic mechanism. Positions 68, 70, and 116 each coordinate tRNA.

It belongs to the PTH family. Monomer.

It localises to the cytoplasm. The catalysed reaction is an N-acyl-L-alpha-aminoacyl-tRNA + H2O = an N-acyl-L-amino acid + a tRNA + H(+). Functionally, hydrolyzes ribosome-free peptidyl-tRNAs (with 1 or more amino acids incorporated), which drop off the ribosome during protein synthesis, or as a result of ribosome stalling. In terms of biological role, catalyzes the release of premature peptidyl moieties from peptidyl-tRNA molecules trapped in stalled 50S ribosomal subunits, and thus maintains levels of free tRNAs and 50S ribosomes. The protein is Peptidyl-tRNA hydrolase of Pseudomonas syringae pv. tomato (strain ATCC BAA-871 / DC3000).